Here is a 123-residue protein sequence, read N- to C-terminus: Immunoglobulin heavy variable 4-34 (123 aa).

An N-terminal signal peptide occupies residues 1–26 (MDLLHKNMKHLWFFLLLVAAPRWVLS). The interval 26 to 123 (SQVQLQQWGA…ADTAVYYCAR (98 aa)) is v region. The interval 27–51 (QVQLQQWGAGLLKPSETLSLTCAVY) is framework-1. One can recognise an Ig-like domain in the interval 27–123 (QVQLQQWGAG…ADTAVYYCAR (97 aa)). C48 and C121 are joined by a disulfide. The tract at residues 52–59 (GGSFSGYY) is complementarity-determining-1. The segment at 60-76 (WSWIRQPPGKGLEWIGE) is framework-2. The complementarity-determining-2 stretch occupies residues 77 to 83 (INHSGST). N-linked (GlcNAc...) asparagine glycosylation is present at N78. Residues 84–121 (NYNPSLKSRVTISVDTSKNQFSLKLSSVTAADTAVYYC) are framework-3. The complementarity-determining-3 stretch occupies residues 122–123 (AR).

As to quaternary structure, immunoglobulins are composed of two identical heavy chains and two identical light chains; disulfide-linked.

It is found in the secreted. Its subcellular location is the cell membrane. Functionally, v region of the variable domain of immunoglobulin heavy chains that participates in the antigen recognition. Immunoglobulins, also known as antibodies, are membrane-bound or secreted glycoproteins produced by B lymphocytes. In the recognition phase of humoral immunity, the membrane-bound immunoglobulins serve as receptors which, upon binding of a specific antigen, trigger the clonal expansion and differentiation of B lymphocytes into immunoglobulins-secreting plasma cells. Secreted immunoglobulins mediate the effector phase of humoral immunity, which results in the elimination of bound antigens. The antigen binding site is formed by the variable domain of one heavy chain, together with that of its associated light chain. Thus, each immunoglobulin has two antigen binding sites with remarkable affinity for a particular antigen. The variable domains are assembled by a process called V-(D)-J rearrangement and can then be subjected to somatic hypermutations which, after exposure to antigen and selection, allow affinity maturation for a particular antigen. In Homo sapiens (Human), this protein is Immunoglobulin heavy variable 4-34.